A 151-amino-acid polypeptide reads, in one-letter code: Ubiquitin-conjugating enzyme E2 N (151 aa).

The 147-residue stretch at 3–149 folds into the UBC core domain; it reads SLPRRIIKET…AREWTQKYAV (147 aa). Cys-87 serves as the catalytic Glycyl thioester intermediate.

The protein belongs to the ubiquitin-conjugating enzyme family.

The catalysed reaction is S-ubiquitinyl-[E1 ubiquitin-activating enzyme]-L-cysteine + [E2 ubiquitin-conjugating enzyme]-L-cysteine = [E1 ubiquitin-activating enzyme]-L-cysteine + S-ubiquitinyl-[E2 ubiquitin-conjugating enzyme]-L-cysteine.. Its pathway is protein modification; protein ubiquitination. In terms of biological role, catalyzes the covalent attachment of ubiquitin to other proteins. The sequence is that of Ubiquitin-conjugating enzyme E2 N (ben) from Drosophila melanogaster (Fruit fly).